Here is a 577-residue protein sequence, read N- to C-terminus: uncharacterized protein (577 aa).

Composition is skewed to polar residues over residues 1-21 (MSST…QSAS) and 68-87 (SFQN…SKTE). Disordered regions lie at residues 1-24 (MSST…SAHP) and 68-93 (SFQN…PDDV). Helical transmembrane passes span 139-159 (CILA…AVPA), 174-194 (LLTM…WAPL), 204-224 (ILIG…GKDI), 232-252 (FFAG…LADM), 262-282 (ITLF…VGGF), 292-312 (WTEY…YLFC), 367-387 (PICF…YLLL), 402-422 (MGVA…GSGI), 447-467 (LPPM…LSWS), 473-493 (VNWV…LLIF), 504-526 (YLFR…AAGF), and 543-563 (GSLL…FFFF).

This sequence belongs to the major facilitator superfamily. CAR1 family.

Its subcellular location is the endoplasmic reticulum. The protein localises to the membrane. This is an uncharacterized protein from Schizosaccharomyces pombe (strain 972 / ATCC 24843) (Fission yeast).